The sequence spans 737 residues: Oligopeptide transporter 3 (737 aa).

Helical transmembrane passes span 45–65 (AWFL…FFTY), 69–89 (PLTI…KFMA), 117–137 (VIIT…AYSI), 153–173 (FICG…WAGI), 215–235 (FLVA…LFPI), 255–275 (VGSG…AGIS), 289–309 (ILNV…VCYW), 357–377 (LYLS…FTAT), 418–438 (WWFY…SFVW), 446–466 (WWGM…IGVI), 478–498 (IIGQ…NLIF), 532–552 (AQLV…WWML), 604–624 (VWLF…SKIF), 629–649 (WIPL…PPAT), 650–670 (PTNI…VFNY), and 681–701 (VLSA…FFAL).

It belongs to the oligopeptide OPT transporter (TC 2.A.67.1) family. In terms of tissue distribution, strong expression in flowers, leaves and roots. Preferentially expressed in the vascular tissues of seedlings and mature plants as well as in pollen and developing embryos.

The protein resides in the membrane. May be involved in the translocation of tetra- and pentapeptides across the cellular membrane in an energy-dependent manner. Also acts as a metal transporter that could be a component of the copper transport machinery. Essential for early embryo development. The polypeptide is Oligopeptide transporter 3 (OPT3) (Arabidopsis thaliana (Mouse-ear cress)).